A 234-amino-acid polypeptide reads, in one-letter code: Isoprenyl transferase (234 aa).

The active site involves Asp13. Asp13 is a binding site for Mg(2+). Residues 14–17 (GNGR), Trp18, Arg26, His30, and 58–60 (STE) contribute to the substrate site. The Proton acceptor role is filled by Asn61. Substrate contacts are provided by residues Trp62, Arg64, Arg180, and 186-188 (RLS). Glu199 provides a ligand contact to Mg(2+).

This sequence belongs to the UPP synthase family. In terms of assembly, homodimer. The cofactor is Mg(2+).

In terms of biological role, catalyzes the condensation of isopentenyl diphosphate (IPP) with allylic pyrophosphates generating different type of terpenoids. The chain is Isoprenyl transferase (uppS) from Helicobacter pylori (strain ATCC 700392 / 26695) (Campylobacter pylori).